Reading from the N-terminus, the 602-residue chain is tRNA uridine 5-carboxymethylaminomethyl modification enzyme MnmG (602 aa).

10–15 lines the FAD pocket; that stretch reads GGGHAG. The disordered stretch occupies residues 217–242; that stretch reads DPQPRGFTGRPGPRAAESPTWQTHTT. 267–281 serves as a coordination point for NAD(+); sequence GPRYCPSIEDKVVRF.

The protein belongs to the MnmG family. In terms of assembly, homodimer. Heterotetramer of two MnmE and two MnmG subunits. The cofactor is FAD.

Its subcellular location is the cytoplasm. NAD-binding protein involved in the addition of a carboxymethylaminomethyl (cmnm) group at the wobble position (U34) of certain tRNAs, forming tRNA-cmnm(5)s(2)U34. The chain is tRNA uridine 5-carboxymethylaminomethyl modification enzyme MnmG from Deinococcus geothermalis (strain DSM 11300 / CIP 105573 / AG-3a).